Consider the following 123-residue polypeptide: Small ribosomal subunit protein uS12 (123 aa).

Residues 1-28 form a disordered region; sequence MPTIQQLIRKPRQPKVKRSKSQHLEQCP. The segment covering 9-21 has biased composition (basic residues); the sequence is RKPRQPKVKRSKS. Position 89 is a 3-methylthioaspartic acid (D89).

This sequence belongs to the universal ribosomal protein uS12 family. As to quaternary structure, part of the 30S ribosomal subunit. Contacts proteins S8 and S17. May interact with IF1 in the 30S initiation complex.

Functionally, with S4 and S5 plays an important role in translational accuracy. In terms of biological role, interacts with and stabilizes bases of the 16S rRNA that are involved in tRNA selection in the A site and with the mRNA backbone. Located at the interface of the 30S and 50S subunits, it traverses the body of the 30S subunit contacting proteins on the other side and probably holding the rRNA structure together. The combined cluster of proteins S8, S12 and S17 appears to hold together the shoulder and platform of the 30S subunit. This is Small ribosomal subunit protein uS12 from Ruegeria pomeroyi (strain ATCC 700808 / DSM 15171 / DSS-3) (Silicibacter pomeroyi).